The primary structure comprises 135 residues: Large ribosomal subunit protein uL16 (135 aa).

It belongs to the universal ribosomal protein uL16 family. In terms of assembly, part of the 50S ribosomal subunit.

Functionally, binds 23S rRNA and is also seen to make contacts with the A and possibly P site tRNAs. This is Large ribosomal subunit protein uL16 (rplP) from Carsonella ruddii (strain PV).